Here is a 90-residue protein sequence, read N- to C-terminus: UPF0512 protein L (90 aa).

The protein belongs to the UPF0512 family.

In Dictyostelium discoideum (Social amoeba), this protein is UPF0512 protein L.